The primary structure comprises 81 residues: Small ribosomal subunit protein bS16 (81 aa).

Belongs to the bacterial ribosomal protein bS16 family.

This is Small ribosomal subunit protein bS16 from Clostridium botulinum (strain Eklund 17B / Type B).